The chain runs to 297 residues: Formylmethanofuran--tetrahydromethanopterin formyltransferase (297 aa).

It belongs to the FTR family. Homotetramer.

It is found in the cytoplasm. The enzyme catalyses N-formylmethanofuran + 5,6,7,8-tetrahydromethanopterin + H(+) = N(5)-formyl-5,6,7,8-tetrahydromethanopterin + methanofuran. The protein operates within one-carbon metabolism; methanogenesis from CO(2); 5,10-methenyl-5,6,7,8-tetrahydromethanopterin from CO(2): step 2/3. Its function is as follows. Catalyzes the reversible transfer of a formyl group from formylmethanofuran (formyl-MFR) to tetrahydromethanopterin (H(4)MPT) to produce 5-formyl tetrahydromethanopterin (5-formyl-H(4)MPT) and methanofuran (MFR). In Methanosarcina barkeri (strain Fusaro / DSM 804), this protein is Formylmethanofuran--tetrahydromethanopterin formyltransferase.